Here is a 596-residue protein sequence, read N- to C-terminus: Alpha-1,3-galactosidase A (596 aa).

The signal sequence occupies residues 1 to 21; sequence MQNPVASLLFILAMLTGPCPA. The tract at residues 23–57 is disordered; that stretch reads DYPERTERTQSAGNHVWHIDPDKGNDGNPGTAPST. 4 PbH1 repeats span residues 351–373, 482–504, 515–537, and 547–569; these read RGKIIVKDCVLGASHDDAVNVHG, RKPVLVERCRFEKTGMPAILVED, VRNMTISRNTFIQCGEAVIQIVP, and HRNITITGNTFDLKNGTAIRIRH.

This sequence belongs to the glycosyl hydrolase 110 family. A subfamily.

It catalyses the reaction Hydrolysis of terminal, non-reducing branched (1-&gt;3)-alpha-D-galactosidic residues, producing free D-galactose.. The enzyme catalyses Hydrolysis of terminal, non-reducing alpha-D-galactose residues in alpha-D-galactosides, including galactose oligosaccharides, galactomannans and galactolipids.. In terms of biological role, alpha-galactosidase that specifically removes branched alpha-1,3-linked galactose residues present in blood group B antigens. Has no activity toward linear alpha-1,3-linked galactose residues. This chain is Alpha-1,3-galactosidase A (glaA), found in Akkermansia muciniphila (strain ATCC BAA-835 / DSM 22959 / JCM 33894 / BCRC 81048 / CCUG 64013 / CIP 107961 / Muc).